A 258-amino-acid chain; its full sequence is Acetylglutamate kinase (258 aa).

Residues 44–45, arginine 66, and asparagine 158 each bind substrate; that span reads GG. Residues 181-186 and 209-211 contribute to the ATP site; these read DVSGIL and IIT.

This sequence belongs to the acetylglutamate kinase family. ArgB subfamily. As to quaternary structure, homodimer.

The protein localises to the cytoplasm. The enzyme catalyses N-acetyl-L-glutamate + ATP = N-acetyl-L-glutamyl 5-phosphate + ADP. It participates in amino-acid biosynthesis; L-arginine biosynthesis; N(2)-acetyl-L-ornithine from L-glutamate: step 2/4. Functionally, catalyzes the ATP-dependent phosphorylation of N-acetyl-L-glutamate. The sequence is that of Acetylglutamate kinase from Shigella flexneri serotype 5b (strain 8401).